The primary structure comprises 338 residues: Pyridoxal 5'-phosphate synthase subunit PdxS (338 aa).

D66 serves as a coordination point for D-ribose 5-phosphate. Catalysis depends on K123, which acts as the Schiff-base intermediate with D-ribose 5-phosphate. G195 is a binding site for D-ribose 5-phosphate. K207 serves as a coordination point for D-glyceraldehyde 3-phosphate. Residues G256 and 277–278 (GS) contribute to the D-ribose 5-phosphate site.

The protein belongs to the PdxS/SNZ family. In the presence of PdxT, forms a dodecamer of heterodimers.

The catalysed reaction is aldehydo-D-ribose 5-phosphate + D-glyceraldehyde 3-phosphate + L-glutamine = pyridoxal 5'-phosphate + L-glutamate + phosphate + 3 H2O + H(+). The protein operates within cofactor biosynthesis; pyridoxal 5'-phosphate biosynthesis. Its function is as follows. Catalyzes the formation of pyridoxal 5'-phosphate from ribose 5-phosphate (RBP), glyceraldehyde 3-phosphate (G3P) and ammonia. The ammonia is provided by the PdxT subunit. Can also use ribulose 5-phosphate and dihydroxyacetone phosphate as substrates, resulting from enzyme-catalyzed isomerization of RBP and G3P, respectively. This chain is Pyridoxal 5'-phosphate synthase subunit PdxS, found in Saccharolobus islandicus (strain L.S.2.15 / Lassen #1) (Sulfolobus islandicus).